The primary structure comprises 129 residues: Small ribosomal subunit protein uS13 (129 aa).

A disordered region spans residues 96-129; it reads GLPVRGQRTSTNARTRKGPRKTVGVSKAAAAAKA.

This sequence belongs to the universal ribosomal protein uS13 family. As to quaternary structure, part of the 30S ribosomal subunit. Forms a loose heterodimer with protein S19. Forms two bridges to the 50S subunit in the 70S ribosome.

Its function is as follows. Located at the top of the head of the 30S subunit, it contacts several helices of the 16S rRNA. In the 70S ribosome it contacts the 23S rRNA (bridge B1a) and protein L5 of the 50S subunit (bridge B1b), connecting the 2 subunits; these bridges are implicated in subunit movement. Contacts the tRNAs in the A and P-sites. The sequence is that of Small ribosomal subunit protein uS13 from Opitutus terrae (strain DSM 11246 / JCM 15787 / PB90-1).